The primary structure comprises 273 residues: Shikimate dehydrogenase (NADP(+)) (273 aa).

Residues 14 to 16 (SKS) and Thr61 each bind shikimate. Lys65 acts as the Proton acceptor in catalysis. Glu77 contacts NADP(+). Shikimate is bound by residues Asn86 and Asp102. Residues 126–130 (GAGGA), 150–155 (NRTLSK), and Met214 each bind NADP(+). Tyr216 lines the shikimate pocket. Gly238 contributes to the NADP(+) binding site.

This sequence belongs to the shikimate dehydrogenase family. In terms of assembly, homodimer.

It catalyses the reaction shikimate + NADP(+) = 3-dehydroshikimate + NADPH + H(+). It functions in the pathway metabolic intermediate biosynthesis; chorismate biosynthesis; chorismate from D-erythrose 4-phosphate and phosphoenolpyruvate: step 4/7. Its function is as follows. Involved in the biosynthesis of the chorismate, which leads to the biosynthesis of aromatic amino acids. Catalyzes the reversible NADPH linked reduction of 3-dehydroshikimate (DHSA) to yield shikimate (SA). This Photobacterium profundum (strain SS9) protein is Shikimate dehydrogenase (NADP(+)).